Consider the following 255-residue polypeptide: Ribonuclease HII (255 aa).

An RNase H type-2 domain is found at 72-255 (RLIAGVDEAG…KTFAPVQSYC (184 aa)). Residues Asp-78, Glu-79, and Asp-170 each coordinate a divalent metal cation.

This sequence belongs to the RNase HII family. The cofactor is Mn(2+). Mg(2+) is required as a cofactor.

The protein resides in the cytoplasm. The enzyme catalyses Endonucleolytic cleavage to 5'-phosphomonoester.. Its function is as follows. Endonuclease that specifically degrades the RNA of RNA-DNA hybrids. The protein is Ribonuclease HII of Bacillus velezensis (strain DSM 23117 / BGSC 10A6 / LMG 26770 / FZB42) (Bacillus amyloliquefaciens subsp. plantarum).